A 206-amino-acid chain; its full sequence is Dephospho-CoA kinase (206 aa).

One can recognise a DPCK domain in the interval 4-200 (IVALTGGIGS…AHYLQLASQF (197 aa)). 12-17 (GSGKST) is a binding site for ATP.

Belongs to the CoaE family.

It localises to the cytoplasm. The catalysed reaction is 3'-dephospho-CoA + ATP = ADP + CoA + H(+). It participates in cofactor biosynthesis; coenzyme A biosynthesis; CoA from (R)-pantothenate: step 5/5. Its function is as follows. Catalyzes the phosphorylation of the 3'-hydroxyl group of dephosphocoenzyme A to form coenzyme A. The protein is Dephospho-CoA kinase of Shigella flexneri.